The chain runs to 91 residues: C-C motif chemokine 5 (91 aa).

The signal sequence occupies residues 1-23 (MKVSATAFAVLLMAAALCAPASA). 2 disulfides stabilise this stretch: Cys-33-Cys-57 and Cys-34-Cys-73.

The protein belongs to the intercrine beta (chemokine CC) family.

It localises to the secreted. Its function is as follows. Chemoattractant for blood monocytes, memory T-helper cells and eosinophils. Causes the release of histamine from basophils and activates eosinophils. May activate several chemokine receptors including CCR1, CCR3, CCR4 and CCR5. May also be an agonist of the G protein-coupled receptor GPR75. Together with GPR75, may play a role in neuron survival through activation of a downstream signaling pathway involving the PI3, Akt and MAP kinases. By activating GPR75 may also play a role in insulin secretion by islet cells. The sequence is that of C-C motif chemokine 5 (CCL5) from Bos taurus (Bovine).